A 245-amino-acid chain; its full sequence is MAMTLSTKAFAQRGVSARKNTVRVYAATTKVNPKLASKTEVERFKQATGLPAPAINGKQFPLKLGFTKTNELFVGRLAMVGFSASLIGEILTGKGALAQFGYETGLNGIEVDGLVIGLIAFNLIAAVLPTSQTFVPEEQDTISERPAGPLQDPRITLLEPKKFFGVQGFGFTKENELFVGRAAQLGFAFSLIGEAVTGKGALAQFDIETGLSLRDTEFGLVVFILFLLFAAINEGSGKFVDEESA.

A chloroplast-targeting transit peptide spans 1-25 (MAMTLSTKAFAQRGVSARKNTVRVY). The next 4 helical transmembrane spans lie at 72–92 (LFVG…EILT), 108–128 (GIEV…AAVL), 185–205 (LGFA…LAQF), and 217–237 (EFGL…EGSG).

Belongs to the ELIP/psbS family.

It localises to the plastid. The protein localises to the chloroplast thylakoid membrane. In terms of biological role, required for non-photochemical quenching (NPQ), a mechanism that converts and dissipates the harmful excess absorbed light energy into heat and protect the photosynthetic apparatus from photo-oxidative damage. Seems involved in the activation of NPQ, possibly by promoting conformational changes required for activation of LHCSR3-dependent quenching in the antenna of photosystem II (PSII). The protein is Photosystem II protein PSBS2 of Chlamydomonas reinhardtii (Chlamydomonas smithii).